Consider the following 393-residue polypeptide: Trehalose import ATP-binding protein SugC (393 aa).

Residues Ile4–Ile235 form the ABC transporter domain. Residue Gly37 to Thr44 coordinates ATP. Residues Leu135–Gln139 carry the Helical C-loop; LSGGQ motif motif.

The protein belongs to the ABC transporter superfamily. Monomer. Homodimerizes in the presence of ATP. The complex is composed of two ATP-binding proteins (SugC), two transmembrane proteins (SugA and SugB) and a solute-binding protein (LpqY).

It localises to the cell inner membrane. The catalysed reaction is alpha,alpha-trehalose(out) + ATP + H2O = alpha,alpha-trehalose(in) + ADP + phosphate + H(+). Its function is as follows. Part of the ABC transporter complex LpqY-SugA-SugB-SugC, which is highly specific for uptake of trehalose. Involved in the recycling of extracellular trehalose released from trehalose-containing molecules synthesized by M.tuberculosis. Trehalose uptake is essential for virulence. Responsible for energy coupling to the transport system. The chain is Trehalose import ATP-binding protein SugC (sugC) from Mycobacterium tuberculosis (strain CDC 1551 / Oshkosh).